A 101-amino-acid polypeptide reads, in one-letter code: Small ribosomal subunit protein uS14 (101 aa).

Belongs to the universal ribosomal protein uS14 family. As to quaternary structure, part of the 30S ribosomal subunit. Contacts proteins S3 and S10.

Its function is as follows. Binds 16S rRNA, required for the assembly of 30S particles and may also be responsible for determining the conformation of the 16S rRNA at the A site. This is Small ribosomal subunit protein uS14 from Bordetella parapertussis (strain 12822 / ATCC BAA-587 / NCTC 13253).